We begin with the raw amino-acid sequence, 562 residues long: Laccase-2 (562 aa).

The signal sequence occupies residues 1–26; it reads MASAASSLPLLVSSLLLALFALGAHA. Plastocyanin-like domains follow at residues 34–150 and 160–312; these read DIVM…PAAG and DEAE…YAGV. N-linked (GlcNAc...) asparagine glycans are attached at residues N39, N53, N72, and N80. Cu cation is bound by residues H84 and H86. A glycan (N-linked (GlcNAc...) asparagine) is linked at N118. Cu cation is bound by residues H129 and H131. N-linked (GlcNAc...) asparagine glycans are attached at residues N189, N244, N300, N328, N376, N386, N421, and N445. The Plastocyanin-like 3 domain occupies 411–546; the sequence is DFPDRPPARF…KMAFLVEDGS (136 aa). Positions 463, 466, 468, 525, 526, 527, and 531 each coordinate Cu cation.

The protein belongs to the multicopper oxidase family. Cu cation is required as a cofactor.

The protein resides in the secreted. The protein localises to the extracellular space. It localises to the apoplast. The enzyme catalyses 4 hydroquinone + O2 = 4 benzosemiquinone + 2 H2O. Functionally, lignin degradation and detoxification of lignin-derived products. This Oryza sativa subsp. japonica (Rice) protein is Laccase-2 (LAC2).